The primary structure comprises 634 residues: uncharacterized protein (634 aa).

Positions 1 to 40 are cleaved as a signal peptide; it reads MWLQQRLKGLPGLLSSSWARRLLCLLGLLLLLLWFGGSGA. Residues 41-589 are Extracellular-facing; that stretch reads RRAAGGLHLL…DEHMAQQDPG (549 aa). Asparagine 363 is a glycosylation site (N-linked (GlcNAc...) asparagine). The helical transmembrane segment at 590–610 threads the bilayer; that stretch reads LPFLFWFSVASLITLFHLFLF. Topologically, residues 611–634 are cytoplasmic; that stretch reads KLIYNEYCGPGAKPLFRSKEDPSV.

It localises to the membrane. This is an uncharacterized protein from Homo sapiens (Human).